The following is a 61-amino-acid chain: Small ribosomal subunit protein uS14 (61 aa).

4 residues coordinate Zn(2+): Cys24, Cys27, Cys40, and Cys43.

This sequence belongs to the universal ribosomal protein uS14 family. Zinc-binding uS14 subfamily. In terms of assembly, part of the 30S ribosomal subunit. Contacts proteins S3 and S10. It depends on Zn(2+) as a cofactor.

Functionally, binds 16S rRNA, required for the assembly of 30S particles and may also be responsible for determining the conformation of the 16S rRNA at the A site. This chain is Small ribosomal subunit protein uS14, found in Maridesulfovibrio salexigens (strain ATCC 14822 / DSM 2638 / NCIMB 8403 / VKM B-1763) (Desulfovibrio salexigens).